Here is a 90-residue protein sequence, read N- to C-terminus: Toxin 3FTx-Psa1 (90 aa).

An N-terminal signal peptide occupies residues 1-21; the sequence is MKTLPLVLAVVAFVYLDLAHT. 4 cysteine pairs are disulfide-bonded: cysteine 24-cysteine 43, cysteine 36-cysteine 61, cysteine 65-cysteine 76, and cysteine 77-cysteine 82.

It belongs to the three-finger toxin family. Ancestral subfamily. In terms of tissue distribution, expressed by the venom gland.

The protein resides in the secreted. The chain is Toxin 3FTx-Psa1 from Psammophis mossambicus (Olive sand snake).